The sequence spans 425 residues: Dihydroorotase (425 aa).

Residues H56 and H58 each coordinate Zn(2+). Residues 58–60 and N90 each bind substrate; that span reads HYR. Zn(2+) is bound by residues D148, H175, and H228. N274 is a binding site for substrate. D301 is a Zn(2+) binding site. The active site involves D301. Substrate contacts are provided by residues H305 and 319–320; that span reads FG.

This sequence belongs to the metallo-dependent hydrolases superfamily. DHOase family. Class I DHOase subfamily. The cofactor is Zn(2+).

It catalyses the reaction (S)-dihydroorotate + H2O = N-carbamoyl-L-aspartate + H(+). The protein operates within pyrimidine metabolism; UMP biosynthesis via de novo pathway; (S)-dihydroorotate from bicarbonate: step 3/3. Functionally, catalyzes the reversible cyclization of carbamoyl aspartate to dihydroorotate. The chain is Dihydroorotase from Lactobacillus delbrueckii subsp. bulgaricus (strain ATCC 11842 / DSM 20081 / BCRC 10696 / JCM 1002 / NBRC 13953 / NCIMB 11778 / NCTC 12712 / WDCM 00102 / Lb 14).